The primary structure comprises 224 residues: UPF0758 protein VCM66_0205 (224 aa).

Positions 1-20 (MSLKQLPTESMPREKLLQRG) are disordered. Positions 102–224 (ALTSPQQTKL…VVSFAERGWI (123 aa)) constitute an MPN domain. Positions 173, 175, and 186 each coordinate Zn(2+). The short motif at 173–186 (HNHPSGVAEPSQAD) is the JAMM motif element.

It belongs to the UPF0758 family.

The sequence is that of UPF0758 protein VCM66_0205 from Vibrio cholerae serotype O1 (strain M66-2).